A 297-amino-acid chain; its full sequence is Formamidopyrimidine-DNA glycosylase (297 aa).

Proline 2 (schiff-base intermediate with DNA) is an active-site residue. Glutamate 3 functions as the Proton donor in the catalytic mechanism. Catalysis depends on lysine 58, which acts as the Proton donor; for beta-elimination activity. DNA is bound by residues histidine 106, arginine 133, and arginine 178. Residues 263–297 form an FPG-type zinc finger; sequence FVYDRAGEPCRICGTPIRQILQGQRSTFYCPHCQH. The active-site Proton donor; for delta-elimination activity is the arginine 287.

It belongs to the FPG family. In terms of assembly, monomer. Zn(2+) is required as a cofactor.

It catalyses the reaction Hydrolysis of DNA containing ring-opened 7-methylguanine residues, releasing 2,6-diamino-4-hydroxy-5-(N-methyl)formamidopyrimidine.. The enzyme catalyses 2'-deoxyribonucleotide-(2'-deoxyribose 5'-phosphate)-2'-deoxyribonucleotide-DNA = a 3'-end 2'-deoxyribonucleotide-(2,3-dehydro-2,3-deoxyribose 5'-phosphate)-DNA + a 5'-end 5'-phospho-2'-deoxyribonucleoside-DNA + H(+). In terms of biological role, involved in base excision repair of DNA damaged by oxidation or by mutagenic agents. Acts as a DNA glycosylase that recognizes and removes damaged bases. Has a preference for oxidized purines, such as 7,8-dihydro-8-oxoguanine (8-oxoG). Has AP (apurinic/apyrimidinic) lyase activity and introduces nicks in the DNA strand. Cleaves the DNA backbone by beta-delta elimination to generate a single-strand break at the site of the removed base with both 3'- and 5'-phosphates. The sequence is that of Formamidopyrimidine-DNA glycosylase from Cupriavidus metallidurans (strain ATCC 43123 / DSM 2839 / NBRC 102507 / CH34) (Ralstonia metallidurans).